A 420-amino-acid polypeptide reads, in one-letter code: Serine hydroxymethyltransferase (420 aa).

Residues L123 and 127-129 contribute to the (6S)-5,6,7,8-tetrahydrofolate site; that span reads GHL. Residue K232 is modified to N6-(pyridoxal phosphate)lysine. 357 to 359 lines the (6S)-5,6,7,8-tetrahydrofolate pocket; that stretch reads SPF.

Belongs to the SHMT family. Homodimer. It depends on pyridoxal 5'-phosphate as a cofactor.

The protein resides in the cytoplasm. The enzyme catalyses (6R)-5,10-methylene-5,6,7,8-tetrahydrofolate + glycine + H2O = (6S)-5,6,7,8-tetrahydrofolate + L-serine. It participates in one-carbon metabolism; tetrahydrofolate interconversion. It functions in the pathway amino-acid biosynthesis; glycine biosynthesis; glycine from L-serine: step 1/1. In terms of biological role, catalyzes the reversible interconversion of serine and glycine with tetrahydrofolate (THF) serving as the one-carbon carrier. This reaction serves as the major source of one-carbon groups required for the biosynthesis of purines, thymidylate, methionine, and other important biomolecules. Also exhibits THF-independent aldolase activity toward beta-hydroxyamino acids, producing glycine and aldehydes, via a retro-aldol mechanism. The polypeptide is Serine hydroxymethyltransferase (Streptococcus pyogenes serotype M12 (strain MGAS2096)).